Reading from the N-terminus, the 142-residue chain is 3-hydroxyacyl-[acyl-carrier-protein] dehydratase FabZ (142 aa).

Residue histidine 48 is part of the active site.

Belongs to the thioester dehydratase family. FabZ subfamily.

The protein localises to the cytoplasm. It catalyses the reaction a (3R)-hydroxyacyl-[ACP] = a (2E)-enoyl-[ACP] + H2O. Its function is as follows. Involved in unsaturated fatty acids biosynthesis. Catalyzes the dehydration of short chain beta-hydroxyacyl-ACPs and long chain saturated and unsaturated beta-hydroxyacyl-ACPs. The protein is 3-hydroxyacyl-[acyl-carrier-protein] dehydratase FabZ of Clostridioides difficile (strain 630) (Peptoclostridium difficile).